A 5154-amino-acid polypeptide reads, in one-letter code: Hydrocephalus-inducing protein (5154 aa).

The interaction with KIF9 stretch occupies residues 409-800 (MILEDSVLDP…VLLSSPSPCG (392 aa)). Basic and acidic residues predominate over residues 997 to 1009 (RPKEKQSKKEPGK). Disordered regions lie at residues 997–1033 (RPKE…GNPV), 1966–1988 (ENEE…TSIS), 2193–2222 (ADSH…SPLL), 2383–2423 (KLQQ…QGAT), 2521–2572 (HTGT…KAER), and 2706–2762 (KAQE…DIDQ). A compositionally biased stretch (low complexity) spans 1010 to 1024 (KGSTSSSRRQSKASQ). Residues 1948–1977 (EMKKSKEEHMKAKYMENLENEEEEMNTSDQ) are a coiled coil. 2 stretches are compositionally biased toward polar residues: residues 1974–1988 (TSDQ…TSIS) and 2209–2220 (SETPQVQISSSP). Residues 2308–2444 (YVVMKAQEKA…LKMESIERKV (137 aa)) adopt a coiled-coil conformation. 4 stretches are compositionally biased toward basic and acidic residues: residues 2383–2398 (KLQQ…DELK), 2523–2535 (GTDE…DDQR), 2548–2572 (KDRE…KAER), and 2721–2734 (KLKD…ETQK). The stretch at 2543-2588 (GRKGRKDRERERLEKERAEKERLEREKAERERLEKLKALEERSDVE) forms a coiled coil.

As to quaternary structure, interacts with KIF9. As to expression, expressed in brain and testis. Expressed in ciliated epithelial cells lining bronchi and oviduct, and in spermatocytes.

The protein localises to the cell projection. Its subcellular location is the cilium. It is found in the cytoplasm. It localises to the cytoskeleton. The protein resides in the cilium axoneme. The protein localises to the flagellum. Functionally, required for ciliary motility. This chain is Hydrocephalus-inducing protein (Hydin), found in Mus musculus (Mouse).